A 234-amino-acid polypeptide reads, in one-letter code: Elongation factor Tu, chloroplastic (234 aa).

The region spanning 1–125 is the tr-type G domain; that stretch reads KNMITGAAQM…KVDSYIPTPE (125 aa). 47-50 serves as a coordination point for GTP; sequence NKQD.

This sequence belongs to the TRAFAC class translation factor GTPase superfamily. Classic translation factor GTPase family. EF-Tu/EF-1A subfamily.

It is found in the plastid. It localises to the chloroplast. The enzyme catalyses GTP + H2O = GDP + phosphate + H(+). Functionally, GTP hydrolase that promotes the GTP-dependent binding of aminoacyl-tRNA to the A-site of ribosomes during protein biosynthesis. The chain is Elongation factor Tu, chloroplastic (tufA) from Pandorina morum (Freshwater green alga).